The chain runs to 59 residues: Potassium channel toxin alpha-KTx 1.2 (59 aa).

The N-terminal stretch at 1 to 22 (MKILSVLLLALIICSIIDWSEG) is a signal peptide. Residue Q23 is modified to Pyrrolidone carboxylic acid. 3 disulfides stabilise this stretch: C29/C50, C35/C55, and C39/C57. The interaction with Ca(2+)-activated K(+) channels stretch occupies residues 48 to 55 (GKCMNKKC).

The protein belongs to the short scorpion toxin superfamily. Potassium channel inhibitor family. Alpha-KTx 01 subfamily. Expressed by the venom gland.

Its subcellular location is the secreted. Functionally, blocks calcium-activated potassium channels (Kd=43 nM on KCa1.1/KCNMA1). Has a potent presynaptic facilitatory action, with less effect on direct muscle stimulation. The polypeptide is Potassium channel toxin alpha-KTx 1.2 (Leiurus hebraeus (Hebrew deathstalker scorpion)).